Here is a 598-residue protein sequence, read N- to C-terminus: NADH-quinone oxidoreductase subunit C/D (598 aa).

Residues 1-188 (MTDSTTHDAL…DPFVLTKQKE (188 aa)) form an NADH dehydrogenase I subunit C region. The tract at residues 212 to 598 (DFMFLNLGPN…IDFVMSDVDR (387 aa)) is NADH dehydrogenase I subunit D.

This sequence in the N-terminal section; belongs to the complex I 30 kDa subunit family. The protein in the C-terminal section; belongs to the complex I 49 kDa subunit family. In terms of assembly, NDH-1 is composed of 13 different subunits. Subunits NuoB, CD, E, F, and G constitute the peripheral sector of the complex.

The protein localises to the cell inner membrane. It carries out the reaction a quinone + NADH + 5 H(+)(in) = a quinol + NAD(+) + 4 H(+)(out). NDH-1 shuttles electrons from NADH, via FMN and iron-sulfur (Fe-S) centers, to quinones in the respiratory chain. The immediate electron acceptor for the enzyme in this species is believed to be ubiquinone. Couples the redox reaction to proton translocation (for every two electrons transferred, four hydrogen ions are translocated across the cytoplasmic membrane), and thus conserves the redox energy in a proton gradient. In Serratia proteamaculans (strain 568), this protein is NADH-quinone oxidoreductase subunit C/D.